The following is a 106-amino-acid chain: uncharacterized protein (106 aa).

This is an uncharacterized protein from Schizosaccharomyces pombe (strain 972 / ATCC 24843) (Fission yeast).